We begin with the raw amino-acid sequence, 267 residues long: Neuferricin (267 aa).

An N-terminal signal peptide occupies residues Met1 to Thr17. Residues Leu53 to Ile150 form the Cytochrome b5 heme-binding domain.

It belongs to the cytochrome b5 family. MAPR subfamily.

It localises to the secreted. Functionally, heme-binding protein which promotes neuronal but not astrocyte differentiation. The protein is Neuferricin (cyb5d2) of Danio rerio (Zebrafish).